The primary structure comprises 170 residues: MRIFITGMPGVGKTTLALKIAEKLKELGYKVGGFITKEIRDGGKRVGFKIITLDTNEETILAYVGDGKIKVGKYAVFIENLDNVGVEAIKRALKDADIIIIDELGAMEFKSRKFSEVVDEVIKSDKPLLATLHRNWVNKFKDKGELYTLTIENREKLFEEILNKILAGLK.

Residues 7–14 (GMPGVGKT) and 98–105 (IIIIDELG) contribute to the ATP site.

Belongs to the THEP1 NTPase family.

It catalyses the reaction a ribonucleoside 5'-triphosphate + H2O = a ribonucleoside 5'-diphosphate + phosphate + H(+). Functionally, has nucleotide phosphatase activity towards ATP, GTP, CTP, TTP and UTP. May hydrolyze nucleoside diphosphates with lower efficiency. This chain is Nucleoside-triphosphatase THEP1, found in Methanocaldococcus jannaschii (strain ATCC 43067 / DSM 2661 / JAL-1 / JCM 10045 / NBRC 100440) (Methanococcus jannaschii).